The sequence spans 507 residues: Cytochrome P450 monooxygenase cloA (507 aa).

The helical transmembrane segment at 15–35 (WTWILLTTCIALTSPLVLKGI) threads the bilayer. Asparagine 247 is a glycosylation site (N-linked (GlcNAc...) asparagine). Position 450 (cysteine 450) interacts with heme.

The protein belongs to the cytochrome P450 family. The cofactor is heme.

It localises to the membrane. It functions in the pathway alkaloid biosynthesis; ergot alkaloid biosynthesis. Cytochrome P450 monooxygenase; part of the gene cluster that mediates the biosynthesis of fungal ergot alkaloid. DmaW catalyzes the first step of ergot alkaloid biosynthesis by condensing dimethylallyl diphosphate (DMAP) and tryptophan to form 4-dimethylallyl-L-tryptophan. The second step is catalyzed by the methyltransferase easF that methylates 4-dimethylallyl-L-tryptophan in the presence of S-adenosyl-L-methionine, resulting in the formation of 4-dimethylallyl-L-abrine. The catalase easC and the FAD-dependent oxidoreductase easE then transform 4-dimethylallyl-L-abrine to chanoclavine-I which is further oxidized by easD in the presence of NAD(+), resulting in the formation of chanoclavine-I aldehyde. Agroclavine dehydrogenase easG then mediates the conversion of chanoclavine-I aldehyde to agroclavine via a non-enzymatic adduct reaction: the substrate is an iminium intermediate that is formed spontaneously from chanoclavine-I aldehyde in the presence of glutathione. The presence of easA is not required to complete this reaction. Further conversion of agroclavine to paspalic acid is a two-step process involving oxidation of agroclavine to elymoclavine and of elymoclavine to paspalic acid, the second step being performed by the elymoclavine oxidase cloA. Paspalic acid is then further converted to D-lysergic acid. Ergopeptines are assembled from D-lysergic acid and three different amino acids by the D-lysergyl-peptide-synthetases composed each of a monomudular and a trimodular nonribosomal peptide synthetase subunit. LpsB and lpsC encode the monomodular subunits responsible for D-lysergic acid activation and incorporation into the ergopeptine backbone. LpsA1 and A2 subunits encode the trimodular nonribosomal peptide synthetase assembling the tripeptide portion of ergopeptines. LpsA1 is responsible for formation of the major ergopeptine, ergotamine, and lpsA2 for alpha-ergocryptine, the minor ergopeptine of the total alkaloid mixture elaborated by C.purpurea. D-lysergyl-tripeptides are assembled by the nonribosomal peptide synthetases and released as N-(D-lysergyl-aminoacyl)-lactams. Cyclolization of the D-lysergyl-tripeptides is performed by the Fe(2+)/2-ketoglutarate-dependent dioxygenase easH which introduces a hydroxyl group into N-(D-lysergyl-aminoacyl)-lactam at alpha-C of the aminoacyl residue followed by spontaneous condensation with the terminal lactam carbonyl group. This chain is Cytochrome P450 monooxygenase cloA, found in Claviceps purpurea (Ergot fungus).